Consider the following 179-residue polypeptide: Peptide deformylase 2 (179 aa).

Cys101 and His143 together coordinate Fe cation. Glu144 is a catalytic residue. His147 lines the Fe cation pocket.

Belongs to the polypeptide deformylase family. Fe(2+) is required as a cofactor.

The enzyme catalyses N-terminal N-formyl-L-methionyl-[peptide] + H2O = N-terminal L-methionyl-[peptide] + formate. Functionally, removes the formyl group from the N-terminal Met of newly synthesized proteins. Requires at least a dipeptide for an efficient rate of reaction. N-terminal L-methionine is a prerequisite for activity but the enzyme has broad specificity at other positions. In Pseudomonas syringae pv. tomato (strain ATCC BAA-871 / DC3000), this protein is Peptide deformylase 2.